The following is a 319-amino-acid chain: Malate dehydrogenase (319 aa).

Residues 10–15 and D34 contribute to the NAD(+) site; that span reads GAGNIG. Substrate is bound by residues R83 and R89. Residues N96 and 119–121 contribute to the NAD(+) site; that span reads ITN. Substrate-binding residues include N121 and R152. Catalysis depends on H176, which acts as the Proton acceptor.

Belongs to the LDH/MDH superfamily. MDH type 3 family.

It carries out the reaction (S)-malate + NAD(+) = oxaloacetate + NADH + H(+). In terms of biological role, catalyzes the reversible oxidation of malate to oxaloacetate. The protein is Malate dehydrogenase of Francisella philomiragia subsp. philomiragia (strain ATCC 25017 / CCUG 19701 / FSC 153 / O#319-036).